A 359-amino-acid chain; its full sequence is Nicotinate-nucleotide--dimethylbenzimidazole phosphoribosyltransferase (359 aa).

The active-site Proton acceptor is the Glu318.

Belongs to the CobT family. Homodimer.

It catalyses the reaction 5,6-dimethylbenzimidazole + nicotinate beta-D-ribonucleotide = alpha-ribazole 5'-phosphate + nicotinate + H(+). Its pathway is nucleoside biosynthesis; alpha-ribazole biosynthesis; alpha-ribazole from 5,6-dimethylbenzimidazole: step 1/2. Functionally, catalyzes the synthesis of alpha-ribazole-5'-phosphate from nicotinate mononucleotide (NAMN) and 5,6-dimethylbenzimidazole (DMB). This Escherichia coli (strain SMS-3-5 / SECEC) protein is Nicotinate-nucleotide--dimethylbenzimidazole phosphoribosyltransferase.